A 204-amino-acid polypeptide reads, in one-letter code: High frequency lysogenization protein HflD homolog (204 aa).

This sequence belongs to the HflD family.

Its subcellular location is the cytoplasm. It localises to the cell inner membrane. This Stenotrophomonas maltophilia (strain R551-3) protein is High frequency lysogenization protein HflD homolog.